A 321-amino-acid polypeptide reads, in one-letter code: MLGPQIWASMRQGLSRGLSRNVKGKKVDIAGIYPPVTTPFTATAEVDYGKLEENLNRLATFPFRGFVVQGSTGEFPFLTSLERLEVVSRVRQAIPKDKFLIAGSGCESTQATVEMTVSMAQVGADVAMVVTPCYYRGRMSSAALIHHYTKVADVSPIPVVLYSVPANTGLELPVDAVVTLSQHPNIIGLKDSGGDVTRIGLIVHKTSKQDFQVLAGSAGFLLASYAVGAVGGICGLANVLGAQVCQLERLCLTGQWEAAQELQHRLIEPNTAVTRRFGIPGLKKTMDWFGYYGGPCRAPLQELSPTEEEALRLDFSNNGWL.

A mitochondrion-targeting transit peptide spans Met-1–Lys-23. Residue Ser-71–Thr-72 coordinates substrate. The active-site Schiff-base intermediate with substrate is Lys-190. Residues Ser-192 and Gly-216 each contribute to the substrate site.

This sequence belongs to the DapA family. As to quaternary structure, homotetramer.

The protein localises to the mitochondrion. The enzyme catalyses (4S)-4-hydroxy-2-oxoglutarate = glyoxylate + pyruvate. It catalyses the reaction (4R)-4-hydroxy-2-oxoglutarate = glyoxylate + pyruvate. Its activity is regulated as follows. Inhibited by divalent cations. In terms of biological role, catalyzes the final step in the metabolic pathway of hydroxyproline. The sequence is that of 4-hydroxy-2-oxoglutarate aldolase, mitochondrial (Hoga1) from Mus musculus (Mouse).